A 407-amino-acid polypeptide reads, in one-letter code: MIYDHILVRYGELTLKGANRKIFVNKLRSNVKLALMPLQGYTVKANRDRMYIELDEGADIEEMCNRLKKVFGIYSISPVLKIEKTVEAVNELAVRFAKEYADGDTFKIDVKRSDKNFPYDTYALQRTVGGAVLDATNHLSVDVHNPDHNIKVEVRLDAIYMYDQVIEGSGGLPVGTGGKTLLMLSGGIDSPVAGIEVMRRGVTVEAIHFHSPPFTSEKAKEKVIELTRILSGHVGPIKLHIVPFTDLQKQVNKVVHERYTMTSTRRMMMRVADKVVHDIDAHAIVNGENLGQVASQTLKSMYAINHVTSTPVLRPLLTLDKEDIVKKAKEIGTFDVSIQPYEDCCTIFTPKNPITEPDIEKVEKYEIGYDFEPLVQQAVDGIETLLITSDYQSEKDTATQALADDLF.

The THUMP domain occupies 61–165 (EEMCNRLKKV…LDAIYMYDQV (105 aa)). Residues 183–184 (ML), 208–209 (HF), Arg265, Gly287, and Gln296 each bind ATP.

The protein belongs to the ThiI family.

It localises to the cytoplasm. The enzyme catalyses [ThiI sulfur-carrier protein]-S-sulfanyl-L-cysteine + a uridine in tRNA + 2 reduced [2Fe-2S]-[ferredoxin] + ATP + H(+) = [ThiI sulfur-carrier protein]-L-cysteine + a 4-thiouridine in tRNA + 2 oxidized [2Fe-2S]-[ferredoxin] + AMP + diphosphate. It carries out the reaction [ThiS sulfur-carrier protein]-C-terminal Gly-Gly-AMP + S-sulfanyl-L-cysteinyl-[cysteine desulfurase] + AH2 = [ThiS sulfur-carrier protein]-C-terminal-Gly-aminoethanethioate + L-cysteinyl-[cysteine desulfurase] + A + AMP + 2 H(+). It functions in the pathway cofactor biosynthesis; thiamine diphosphate biosynthesis. In terms of biological role, catalyzes the ATP-dependent transfer of a sulfur to tRNA to produce 4-thiouridine in position 8 of tRNAs, which functions as a near-UV photosensor. Also catalyzes the transfer of sulfur to the sulfur carrier protein ThiS, forming ThiS-thiocarboxylate. This is a step in the synthesis of thiazole, in the thiamine biosynthesis pathway. The sulfur is donated as persulfide by IscS. The protein is Probable tRNA sulfurtransferase of Staphylococcus saprophyticus subsp. saprophyticus (strain ATCC 15305 / DSM 20229 / NCIMB 8711 / NCTC 7292 / S-41).